The primary structure comprises 280 residues: Dexamethasone-induced Ras-related protein 1 (280 aa).

An S-nitrosocysteine modification is found at Cys11. 31-38 (GSSKVGKT) is a binding site for GTP. Residues 53–61 (YTPTIEDFH) carry the Effector region motif. Residues 78–82 (DTSGN) and 145–148 (NKGD) each bind GTP. Cysteine methyl ester is present on Cys277. A lipid anchor (S-farnesyl cysteine) is attached at Cys277. A propeptide spans 278–280 (VIS) (removed in mature form).

The protein belongs to the small GTPase superfamily. RasD family. In terms of assembly, component of a complex, at least composed of APBB1, RASD1/DEXRAS1 and APP. Interacts with APBB1/FE65. Forms a ternary complex with CAPON and NOS1. S-nitrosylation stimulates guanine-nucleotide exchange activity. In terms of tissue distribution, expressed in brain, heart, kidney and liver.

It localises to the cell membrane. Its subcellular location is the cytoplasm. The protein resides in the perinuclear region. The protein localises to the nucleus. Functionally, small GTPase. Negatively regulates the transcription regulation activity of the APBB1/FE65-APP complex via its interaction with APBB1/FE65. This is Dexamethasone-induced Ras-related protein 1 (Rasd1) from Mus musculus (Mouse).